Consider the following 238-residue polypeptide: Outer membrane protein A (238 aa).

5 consecutive transmembrane segments (beta stranded) span residues 1-8, 13-21, 43-52, 57-64, and 83-91; these read LTAKLGYP, LDIYTRLGG, PVFAGGVEYA, IATRLEYQ, and LLSVGVSYR. 3 tandem repeats follow at residues 104-105, 106-107, and 108-109. The segment at 104–109 is 3 X 2 AA tandem repeats of A-P; sequence APAPAP. Positions 111–238 constitute an OmpA-like domain; sequence VQTKHFTLKS…RRVEIEVKGI (128 aa). Cys-212 and Cys-224 are disulfide-bonded.

Belongs to the outer membrane OOP (TC 1.B.6) superfamily. OmpA family. As to quaternary structure, monomer and homodimer.

It localises to the cell outer membrane. Functionally, with TolR probably plays a role in maintaining the position of the peptidoglycan cell wall in the periplasm. Acts as a porin with low permeability that allows slow penetration of small solutes; an internal gate slows down solute passage. The chain is Outer membrane protein A from Citrobacter freundii.